Reading from the N-terminus, the 451-residue chain is ADP-specific phosphofructokinase (451 aa).

The 450-residue stretch at 1 to 450 (MSVPQDVSIF…FITYVNYLKR (450 aa)) folds into the ADPK domain. Mg(2+) contacts are provided by E261, E291, and D434. D434 functions as the Proton acceptor in the catalytic mechanism.

The protein belongs to the carbohydrate kinase PfkC family. The cofactor is Mg(2+).

It localises to the cytoplasm. It catalyses the reaction beta-D-fructose 6-phosphate + ADP = beta-D-fructose 1,6-bisphosphate + AMP + H(+). It participates in carbohydrate degradation; glycolysis. In terms of biological role, catalyzes the phosphorylation of fructose 6-phosphate to fructose 1,6-bisphosphate using ADP as the phosphate donor. The chain is ADP-specific phosphofructokinase from Pyrococcus abyssi (strain GE5 / Orsay).